The chain runs to 255 residues: 14-3-3 protein epsilon (255 aa).

At methionine 1 the chain carries N-acetylmethionine. Lysine 50 is subject to N6-acetyllysine; alternate. A Glycyl lysine isopeptide (Lys-Gly) (interchain with G-Cter in SUMO2); alternate cross-link involves residue lysine 50. At serine 65 the chain carries Phosphoserine. Lysine 69, lysine 118, and lysine 123 each carry N6-acetyllysine. Tyrosine 131 is modified (phosphotyrosine). The residue at position 137 (threonine 137) is a Phosphothreonine. Serine 210 is subject to Phosphoserine. A Phosphothreonine modification is found at threonine 232. The interval 234–255 is disordered; the sequence is DMQGDGEEQNKEALQDVEDENQ.

Belongs to the 14-3-3 family. Homodimer. Heterodimerizes with YWHAZ. Interacts with PKA-phosphorylated AANAT. Interacts with ABL1 (phosphorylated form); the interaction retains it in the cytoplasm. Interacts with ARHGEF28. Interacts with BEX3. Weakly interacts with CDKN1B. Interacts with the 'Thr-369' phosphorylated form of DAPK2. Interacts with DENND1A. Interacts with GAB2. Interacts with phosphorylated GRB10. Interacts with KSR1. Interacts with NDEL1. Interacts with PI4KB, TBC1D22A and TBC1D22B. Interacts with the phosphorylated (by AKT1) form of SRPK2. Interacts with TIAM2. Interacts with the 'Ser-1134' and 'Ser-1161' phosphorylated form of SOS1. Interacts with ZFP36 (via phosphorylated form). Interacts with SLITRK1. Interacts with HSF1 (via phosphorylated form); this interaction promotes HSF1 sequestration in the cytoplasm in a ERK-dependent manner. Interacts with RIPOR2. Interacts with KLHL22; required for the nuclear localization of KLHL22 upon amino acid starvation. Interacts with CRTC1. Interacts with CRTC2 (probably when phosphorylated at 'Ser-171'). Interacts with CRTC3 (probably when phosphorylated at 'Ser-162' and/or 'Ser-273'). Interacts with ATP2B1 and ATP2B3; this interaction inhibits calcium-transporting ATPase activity. Interacts with MEFV. Interacts with RNF115. Interacts with GPR15; this interaction promotes ER-to-Golgi transport of GPR15.

Its subcellular location is the nucleus. The protein resides in the cytoplasm. It localises to the melanosome. Its function is as follows. Adapter protein implicated in the regulation of a large spectrum of both general and specialized signaling pathways. Binds to a large number of partners, usually by recognition of a phosphoserine or phosphothreonine motif. Binding generally results in the modulation of the activity of the binding partner. Positively regulates phosphorylated protein HSF1 nuclear export to the cytoplasm. This is 14-3-3 protein epsilon (Ywhae) from Rattus norvegicus (Rat).